The sequence spans 395 residues: Chalcone synthase (395 aa).

Position 2 is an N-acetylvaline (Val-2). Val-2 carries the N-acetylalanine modification. Cys-169 is an active-site residue.

This sequence belongs to the thiolase-like superfamily. Chalcone/stilbene synthases family.

The enzyme catalyses (E)-4-coumaroyl-CoA + 3 malonyl-CoA + 3 H(+) = 2',4,4',6'-tetrahydroxychalcone + 3 CO2 + 4 CoA. It participates in secondary metabolite biosynthesis; flavonoid biosynthesis. In terms of biological role, the primary product of this enzyme is 4,2',4',6'-tetrahydroxychalcone (also termed naringenin-chalcone or chalcone) which can under specific conditions spontaneously isomerize into naringenin. This Arabidopsis thaliana (Mouse-ear cress) protein is Chalcone synthase (CHS).